The sequence spans 80 residues: MSPKVQALIFIVGLITLLAAHAQEELSDNIESERGCSGAYKRCSSSQRCCEGRPCVCSAINSNCKCRKTYTELFKEYFGK.

A signal peptide spans methionine 1–alanine 22. A propeptide spanning residues glutamine 23–arginine 34 is cleaved from the precursor. Cystine bridges form between cysteine 36–cysteine 50, cysteine 43–cysteine 55, cysteine 49–cysteine 66, and cysteine 57–cysteine 64.

This sequence belongs to the neurotoxin 02 (plectoxin) family. 05 (U19-lycotoxin) subfamily. As to expression, expressed by the venom gland.

It localises to the secreted. This is U19-lycotoxin-Ls1b from Lycosa singoriensis (Wolf spider).